Reading from the N-terminus, the 374-residue chain is Putative F-box protein At3g17480 (374 aa).

One can recognise an F-box domain in the interval S6 to H52.

The polypeptide is Putative F-box protein At3g17480 (Arabidopsis thaliana (Mouse-ear cress)).